The sequence spans 341 residues: Flagellar P-ring protein (341 aa).

An N-terminal signal peptide occupies residues 1–19 (MKQVFLWLIFVLAFHKLLA).

This sequence belongs to the FlgI family. As to quaternary structure, the basal body constitutes a major portion of the flagellar organelle and consists of four rings (L,P,S, and M) mounted on a central rod.

It localises to the periplasm. It is found in the bacterial flagellum basal body. Its function is as follows. Assembles around the rod to form the L-ring and probably protects the motor/basal body from shearing forces during rotation. In Helicobacter acinonychis (strain Sheeba), this protein is Flagellar P-ring protein.